The chain runs to 586 residues: Thioredoxin domain-containing protein 3 (586 aa).

In terms of domain architecture, Thioredoxin spans 10–116 (LQSVVNSQNL…NRKVITLIDE (107 aa)). Cysteine 39 and cysteine 42 are disulfide-bonded. NDK regions lie at residues 157–254 (MAII…VLEE), 312–452 (VQTT…STLA), and 453–586 (LIKP…NPEN).

It in the C-terminal section; belongs to the NDK family. In terms of assembly, monomer. As to expression, testis-specific. Expressed mainly in round spermatids.

The protein resides in the cytoplasm. In terms of biological role, probably required during the final stages of sperm tail maturation in the testis and/or epididymis, where extensive disulfide bonding of fibrous sheath (FS) proteins occurs. In vitro, it has neither nucleoside diphosphate kinase (NDPK) activity nor reducing activity on disulfide bonds. Exhibits a 3'-5' exonuclease activity with a preference for single-stranded DNA, suggesting roles in DNA proofreading and repair. The chain is Thioredoxin domain-containing protein 3 (Nme8) from Mus musculus (Mouse).